The chain runs to 543 residues: CTP synthase (543 aa).

The tract at residues 1 to 265 (MTRYIFVTGG…DDFVVERFGL (265 aa)) is amidoligase domain. S13 is a binding site for CTP. S13 provides a ligand contact to UTP. Residues 14 to 19 (SLGKGI) and D71 contribute to the ATP site. Residues D71 and E139 each coordinate Mg(2+). Residues 146–148 (DIE), 186–191 (KTKPTQ), and K222 contribute to the CTP site. Residues 186–191 (KTKPTQ) and K222 each bind UTP. The Glutamine amidotransferase type-1 domain occupies 290-541 (TIAMVGKYME…VKAALAQHQK (252 aa)). G351 serves as a coordination point for L-glutamine. Residue C378 is the Nucleophile; for glutamine hydrolysis of the active site. L-glutamine-binding positions include 379–382 (LGMQ), E402, and R469. Active-site residues include H514 and E516.

The protein belongs to the CTP synthase family. In terms of assembly, homotetramer.

It catalyses the reaction UTP + L-glutamine + ATP + H2O = CTP + L-glutamate + ADP + phosphate + 2 H(+). The enzyme catalyses L-glutamine + H2O = L-glutamate + NH4(+). The catalysed reaction is UTP + NH4(+) + ATP = CTP + ADP + phosphate + 2 H(+). The protein operates within pyrimidine metabolism; CTP biosynthesis via de novo pathway; CTP from UDP: step 2/2. With respect to regulation, allosterically activated by GTP, when glutamine is the substrate; GTP has no effect on the reaction when ammonia is the substrate. The allosteric effector GTP functions by stabilizing the protein conformation that binds the tetrahedral intermediate(s) formed during glutamine hydrolysis. Inhibited by the product CTP, via allosteric rather than competitive inhibition. Catalyzes the ATP-dependent amination of UTP to CTP with either L-glutamine or ammonia as the source of nitrogen. Regulates intracellular CTP levels through interactions with the four ribonucleotide triphosphates. The protein is CTP synthase of Pseudomonas fluorescens (strain Pf0-1).